Reading from the N-terminus, the 228-residue chain is Leucyl/phenylalanyl-tRNA--protein transferase (228 aa).

Belongs to the L/F-transferase family.

The protein resides in the cytoplasm. It catalyses the reaction N-terminal L-lysyl-[protein] + L-leucyl-tRNA(Leu) = N-terminal L-leucyl-L-lysyl-[protein] + tRNA(Leu) + H(+). The catalysed reaction is N-terminal L-arginyl-[protein] + L-leucyl-tRNA(Leu) = N-terminal L-leucyl-L-arginyl-[protein] + tRNA(Leu) + H(+). It carries out the reaction L-phenylalanyl-tRNA(Phe) + an N-terminal L-alpha-aminoacyl-[protein] = an N-terminal L-phenylalanyl-L-alpha-aminoacyl-[protein] + tRNA(Phe). Its function is as follows. Functions in the N-end rule pathway of protein degradation where it conjugates Leu, Phe and, less efficiently, Met from aminoacyl-tRNAs to the N-termini of proteins containing an N-terminal arginine or lysine. The polypeptide is Leucyl/phenylalanyl-tRNA--protein transferase (Lawsonia intracellularis (strain PHE/MN1-00)).